Here is a 129-residue protein sequence, read N- to C-terminus: Iron-sulfur cluster assembly 1 homolog, mitochondrial (129 aa).

A mitochondrion-targeting transit peptide spans M1–A12. Fe cation-binding residues include C57, C121, and C123.

The protein belongs to the HesB/IscA family. In terms of assembly, interacts with CRY2, but not with CRY1 (in vitro).

Its subcellular location is the mitochondrion. In terms of biological role, involved in the maturation of mitochondrial 4Fe-4S proteins functioning late in the iron-sulfur cluster assembly pathway. Probably involved in the binding of an intermediate of Fe/S cluster assembly. The protein is Iron-sulfur cluster assembly 1 homolog, mitochondrial (Isca1) of Rattus norvegicus (Rat).